The sequence spans 422 residues: Glycine amidinotransferase, mitochondrial (422 aa).

A mitochondrion-targeting transit peptide spans 1 to 37 (MLRVRCVRGGSRGAEAVHYIGSMLRKGFVGWVQRSFQ). Active-site residues include D253 and H302. The active-site Amidino-cysteine intermediate is the C406.

This sequence belongs to the amidinotransferase family. As to quaternary structure, homodimer.

The protein resides in the mitochondrion inner membrane. The enzyme catalyses L-arginine + glycine = guanidinoacetate + L-ornithine. It functions in the pathway amine and polyamine biosynthesis; creatine biosynthesis; creatine from L-arginine and glycine: step 1/2. Its function is as follows. Catalyzes the biosynthesis of guanidinoacetate, the immediate precursor of creatine. Creatine plays a vital role in energy metabolism in muscle tissues. May play a role in embryonic and central nervous system development. The sequence is that of Glycine amidinotransferase, mitochondrial from Xenopus tropicalis (Western clawed frog).